Here is a 98-residue protein sequence, read N- to C-terminus: Large ribosomal subunit protein bL28 (98 aa).

This sequence belongs to the bacterial ribosomal protein bL28 family.

The chain is Large ribosomal subunit protein bL28 from Thermus thermophilus (strain ATCC BAA-163 / DSM 7039 / HB27).